The sequence spans 21 residues: Sarafotoxin-D (21 aa).

2 cysteine pairs are disulfide-bonded: cysteine 1/cysteine 15 and cysteine 3/cysteine 11.

The protein belongs to the endothelin/sarafotoxin family. In terms of tissue distribution, expressed by the venom gland.

Its subcellular location is the secreted. Vasoconstrictor activity. These toxins cause cardiac arrest probably as a result of coronary vasospasm. May act by displaying agonistic activities towards endothelin-1 and -2 receptors (EDNRA and EDNRB). The protein is Sarafotoxin-D of Atractaspis engaddensis (Israeli burrowing asp).